A 215-amino-acid polypeptide reads, in one-letter code: Ribonuclease T (215 aa).

In terms of domain architecture, Exonuclease spans 20–194 (VVIDVETAGF…YDTERTAVLF (175 aa)). Positions 23, 25, 181, and 186 each coordinate Mg(2+). His-181 functions as the Proton donor/acceptor in the catalytic mechanism.

The protein belongs to the RNase T family. Homodimer. Mg(2+) is required as a cofactor.

In terms of biological role, trims short 3' overhangs of a variety of RNA species, leaving a one or two nucleotide 3' overhang. Responsible for the end-turnover of tRNA: specifically removes the terminal AMP residue from uncharged tRNA (tRNA-C-C-A). Also appears to be involved in tRNA biosynthesis. The protein is Ribonuclease T of Salmonella paratyphi A (strain ATCC 9150 / SARB42).